The primary structure comprises 709 residues: Polyribonucleotide nucleotidyltransferase (709 aa).

Mg(2+) is bound by residues D486 and D492. The KH domain maps to 553–612 (PRIHTIKINADKIKDVIGKGGSVIRALTEETGTTIEIEDDGTVKIAATSGEQAKQAIARI). One can recognise an S1 motif domain in the interval 622-690 (GRIYNGKVTR…RQGRIRLSMK (69 aa)). The tract at residues 690–709 (KEAQATQQEAAETSSEDPAN) is disordered. The span at 691–702 (EAQATQQEAAET) shows a compositional bias: low complexity.

It belongs to the polyribonucleotide nucleotidyltransferase family. Component of the RNA degradosome, which is a multiprotein complex involved in RNA processing and mRNA degradation. The cofactor is Mg(2+).

The protein resides in the cytoplasm. It carries out the reaction RNA(n+1) + phosphate = RNA(n) + a ribonucleoside 5'-diphosphate. Involved in mRNA degradation. Catalyzes the phosphorolysis of single-stranded polyribonucleotides processively in the 3'- to 5'-direction. The polypeptide is Polyribonucleotide nucleotidyltransferase (Proteus mirabilis (strain HI4320)).